Here is a 167-residue protein sequence, read N- to C-terminus: Caltractin (167 aa).

Residues 1–18 (MSSARTVRKDKPRGRHHG) are compositionally biased toward basic residues. The disordered stretch occupies residues 1 to 23 (MSSARTVRKDKPRGRHHGLTQQK). EF-hand domains lie at 22–57 (QKRQEIKEAFELFDTDGSGTIDAKELNVAMRALGFE), 58–93 (MTEEQINQMIADVDKDGSGAIDFDEFCHMMTAKIGE), 95–130 (DTKEELMKAFRIIDQDNNGKISPEDIQRIAKELGEN), and 131–166 (FTVKDIQDMIEEADRDRDGEVNVEEFLRMMKRTSYA). Positions 35, 37, 39, 41, 46, 71, 73, 75, 82, 108, 110, 112, 114, 119, 144, 146, 148, 150, and 155 each coordinate Ca(2+).

It belongs to the centrin family.

The protein resides in the cytoplasm. The protein localises to the cytoskeleton. Its subcellular location is the microtubule organizing center. Its function is as follows. Plays a fundamental role in microtubule-organizing center structure and function. This chain is Caltractin, found in Atriplex nummularia (Old man saltbush).